An 865-amino-acid polypeptide reads, in one-letter code: Centrosomal protein of 97 kDa (865 aa).

8 LRR repeats span residues 37 to 58 (DIHT…EKCK), 59 to 80 (RLIQ…AKLT), 81 to 102 (LLRV…KELV), 103 to 124 (HLEW…NSCT), 125 to 146 (ALQH…SKLV), 147 to 168 (SLKT…PAYL), 171 to 192 (SLAI…SFLA), and 196 to 205 (ELEQLSIMNN). The LRRCT domain maps to 211-249 (TPSIPGFDYRPYIVSWCLNLRVLDGYVISQKESLKAEWL). Positions 300-750 (HQRQLMNQSQ…RYGKESDLGD (451 aa)) are CCP110-binding. Residues Ser-308, Ser-413, and Ser-500 each carry the phosphoserine modification. Positions 506–529 (ESTEQKQSDIKKPENTQPENKETI) are disordered. Over residues 508-527 (TEQKQSDIKKPENTQPENKE) the composition is skewed to basic and acidic residues. The residue at position 530 (Ser-530) is a Phosphoserine. Thr-542 carries the post-translational modification Phosphothreonine. The IQ domain maps to 558 to 587 (LNDAATKLQACWRGFYARNYNPQAKDVRYE). The tract at residues 587–865 (EIRLRRMQEH…FQLLHVGVTV (279 aa)) is interaction with MPHOSPH9. The tract at residues 715-769 (QHSLDFEKSSTEGSESSIMGNSIDTVRYGKESDLGDVSEEHGEWNKESSNNEQDN) is disordered. Polar residues predominate over residues 725–738 (TEGSESSIMGNSID). A compositionally biased stretch (basic and acidic residues) spans 741–760 (RYGKESDLGDVSEEHGEWNK). Phosphoserine is present on Ser-763.

As to quaternary structure, interacts with CALM1, CEP76, KIF24 and TALPID3. Interacts with CCP110. ENKD1 competes with CEP97 for binding to CCP110, destabilizing the interaction between CP110 and CEP97 which promotes the removal of CCP110 and CEP97 from the mother centriole and allows the initiation of ciliogenesis. Via its interaction with CCP110, may indirectly interact with HERC2 and NEURL4. Interacts with MPHOSPH9.

It is found in the cytoplasm. The protein resides in the cytoskeleton. It localises to the microtubule organizing center. The protein localises to the centrosome. Its subcellular location is the centriole. In terms of biological role, acts as a key negative regulator of ciliogenesis in collaboration with CCP110 by capping the mother centriole thereby preventing cilia formation. Required for recruitment of CCP110 to the centrosome. This Homo sapiens (Human) protein is Centrosomal protein of 97 kDa (CEP97).